Here is a 337-residue protein sequence, read N- to C-terminus: MLTDIALDAWGSDKAPEPEIKGAILACRHLPVRVHLVGQQDVLEPLLAQALRGARLPIEIVHASERIAMDEKAAQAVRTKRDSSMRVGLKLVREKKVAGFFTAGNTGAAMATAKMVLGALPGVDRPALALAVPTLTGPTILLDVGANTDCKAHNLEQFAVMGEMYARKVLKVDRPRVGILSVGEEEGKGNDLTREAFPLIKALPLNFIGNVEGRDIYNGHCDVIVCDGFVGNVALKTSEGILKLVREMLKISLKSTVTAQVGALLSRRAFDEFKRRLDPSEYGGTPLLGVRGVCIIGHGSSNDRAIMNGIRVAAEFATAGVNQQLEADFAAPADSHA.

It belongs to the PlsX family. Homodimer. Probably interacts with PlsY.

The protein localises to the cytoplasm. The catalysed reaction is a fatty acyl-[ACP] + phosphate = an acyl phosphate + holo-[ACP]. It functions in the pathway lipid metabolism; phospholipid metabolism. Its function is as follows. Catalyzes the reversible formation of acyl-phosphate (acyl-PO(4)) from acyl-[acyl-carrier-protein] (acyl-ACP). This enzyme utilizes acyl-ACP as fatty acyl donor, but not acyl-CoA. The protein is Phosphate acyltransferase of Acidobacterium capsulatum (strain ATCC 51196 / DSM 11244 / BCRC 80197 / JCM 7670 / NBRC 15755 / NCIMB 13165 / 161).